Consider the following 114-residue polypeptide: Nucleoid-associated protein NT01CX_0824 (114 aa).

This sequence belongs to the YbaB/EbfC family. As to quaternary structure, homodimer.

The protein localises to the cytoplasm. It localises to the nucleoid. Binds to DNA and alters its conformation. May be involved in regulation of gene expression, nucleoid organization and DNA protection. The chain is Nucleoid-associated protein NT01CX_0824 from Clostridium novyi (strain NT).